The chain runs to 233 residues: Large ribosomal subunit protein uL1 (233 aa).

It belongs to the universal ribosomal protein uL1 family. In terms of assembly, part of the 50S ribosomal subunit.

Binds directly to 23S rRNA. The L1 stalk is quite mobile in the ribosome, and is involved in E site tRNA release. Its function is as follows. Protein L1 is also a translational repressor protein, it controls the translation of the L11 operon by binding to its mRNA. This is Large ribosomal subunit protein uL1 from Psychrobacter sp. (strain PRwf-1).